Consider the following 293-residue polypeptide: Acetylglutamate kinase (293 aa).

Residues G65–G66, R87, and N180 contribute to the substrate site.

It belongs to the acetylglutamate kinase family. ArgB subfamily.

Its subcellular location is the cytoplasm. It carries out the reaction N-acetyl-L-glutamate + ATP = N-acetyl-L-glutamyl 5-phosphate + ADP. The protein operates within amino-acid biosynthesis; L-arginine biosynthesis; N(2)-acetyl-L-ornithine from L-glutamate: step 2/4. Functionally, catalyzes the ATP-dependent phosphorylation of N-acetyl-L-glutamate. This is Acetylglutamate kinase from Cereibacter sphaeroides (strain ATCC 17029 / ATH 2.4.9) (Rhodobacter sphaeroides).